The sequence spans 522 residues: DNA primase DnaG (522 aa).

The Toprim domain occupies 171–257 (DAIIILEGRA…CVEDLVQKEI (87 aa)). Positions 177, 219, and 221 each coordinate Mg(2+).

Belongs to the archaeal DnaG primase family. As to quaternary structure, forms a ternary complex with MCM helicase and DNA. Component of the archaeal exosome complex. Mg(2+) is required as a cofactor.

It catalyses the reaction ssDNA + n NTP = ssDNA/pppN(pN)n-1 hybrid + (n-1) diphosphate.. In terms of biological role, RNA polymerase that catalyzes the synthesis of short RNA molecules used as primers for DNA polymerase during DNA replication. Also part of the exosome, which is a complex involved in RNA degradation. Acts as a poly(A)-binding protein that enhances the interaction between heteromeric, adenine-rich transcripts and the exosome. In Methanosarcina mazei (strain ATCC BAA-159 / DSM 3647 / Goe1 / Go1 / JCM 11833 / OCM 88) (Methanosarcina frisia), this protein is DNA primase DnaG.